A 342-amino-acid chain; its full sequence is SH3 domain-containing YSC84-like protein 1 (342 aa).

The interval 218–266 is disordered; sequence GQRINARKAAREQRKSSAKELPPKPLSRPQQSSAPVQLNSGSQSNRNEY. Basic and acidic residues predominate over residues 226–239; the sequence is AAREQRKSSAKELP. A compositionally biased stretch (polar residues) spans 245–263; sequence RPQQSSAPVQLNSGSQSNR. The SH3 domain occupies 283–342; it reads NQPIEVTALYSFEGQQPGDLNFQAGDRITVISKTDSHFDWWEGKLRGQTGIFPANYVTMN.

Belongs to the SH3YL1 family. In terms of assembly, interacts with SH3D19.

The protein is SH3 domain-containing YSC84-like protein 1 (SH3YL1) of Homo sapiens (Human).